Reading from the N-terminus, the 266-residue chain is Dickkopf-related protein 1 (266 aa).

Residues 1 to 31 (MMALGAAGATRVFVAMVAAALGGHPLLGVSA) form the signal peptide. O-linked (GalNAc...) serine glycosylation is present at serine 61. Disulfide bonds link cysteine 85-cysteine 97, cysteine 91-cysteine 111, cysteine 114-cysteine 128, cysteine 121-cysteine 133, cysteine 127-cysteine 138, cysteine 189-cysteine 201, cysteine 195-cysteine 210, cysteine 200-cysteine 237, cysteine 220-cysteine 245, and cysteine 239-cysteine 263. The DKK-type Cys-1 stretch occupies residues 85–138 (CAEDEECGTDEYCASPTRGGDAGVQICLACRKRRKRCMRHAMCCPGNYCKNGIC). The DKK-type Cys-2 stretch occupies residues 189–263 (CLRSSDCASG…ASNSSRLHTC (75 aa)). A glycan (N-linked (GlcNAc...) asparagine) is linked at asparagine 256.

It belongs to the dickkopf family. As to quaternary structure, interacts with LRP6. Interacts (via the C-terminal Cys-rich domain) with LRP5 (via beta-propeller regions 3 and 4); the interaction, enhanced by MESD and or KREMEN, antagonizes Wnt-mediated signaling. Forms a ternary complex with LRP6 and KREM1. Interacts with KREM1. In terms of tissue distribution, placenta.

The protein localises to the secreted. Its function is as follows. Antagonizes canonical Wnt signaling by inhibiting LRP5/6 interaction with Wnt and by forming a ternary complex with the transmembrane protein KREMEN that promotes internalization of LRP5/6. DKKs play an important role in vertebrate development, where they locally inhibit Wnt regulated processes such as antero-posterior axial patterning, limb development, somitogenesis and eye formation. In the adult, Dkks are implicated in bone formation and bone disease, cancer and Alzheimer disease. Inhibits the pro-apoptotic function of KREMEN1 in a Wnt-independent manner, and has anti-apoptotic activity. The sequence is that of Dickkopf-related protein 1 (DKK1) from Homo sapiens (Human).